A 140-amino-acid polypeptide reads, in one-letter code: Large ribosomal subunit protein uL13 (140 aa).

The protein belongs to the universal ribosomal protein uL13 family. In terms of assembly, part of the 50S ribosomal subunit.

Functionally, this protein is one of the early assembly proteins of the 50S ribosomal subunit, although it is not seen to bind rRNA by itself. It is important during the early stages of 50S assembly. The chain is Large ribosomal subunit protein uL13 from Methanosarcina mazei (strain ATCC BAA-159 / DSM 3647 / Goe1 / Go1 / JCM 11833 / OCM 88) (Methanosarcina frisia).